We begin with the raw amino-acid sequence, 463 residues long: Putative F-box protein At3g29830 (463 aa).

One can recognise an F-box domain in the interval 7–55 (RDRISSLPDVVLVMILSFLSFKDNVKTSILSKRWRNICYEAKNISFKES).

The protein is Putative F-box protein At3g29830 of Arabidopsis thaliana (Mouse-ear cress).